Consider the following 413-residue polypeptide: Cell surface GPI-anchored protein ECM33 (413 aa).

The first 20 residues, 1–20, serve as a signal peptide directing secretion; sequence MQIKSFLLPIVAALLTSVSA. Asn93, Asn102, Asn172, Asn209, Asn222, Asn227, Asn279, Asn290, Asn306, Asn322, and Asn382 each carry an N-linked (GlcNAc...) asparagine glycan. The segment at 347–390 is disordered; that stretch reads YVCTHPANPSSSSKSGSSTQTGKSDSKSSDGSSSSNSSSSSKKG. The segment covering 356 to 390 has biased composition (low complexity); that stretch reads SSSSKSGSSTQTGKSDSKSSDGSSSSNSSSSSKKG. A lipid anchor (GPI-anchor amidated glycine) is attached at Gly390. Residues 391–413 constitute a propeptide, removed in mature form; it reads ASNVLVVPGMVLTTALGVLLALI.

Belongs to the SPS2 family.

It is found in the cell membrane. It localises to the secreted. The protein localises to the cell wall. Cell surface protein required for proper cell wall integrity and for the correct assembly of the mannoprotein outer layer of the cell wall. This chain is Cell surface GPI-anchored protein ECM33 (ECM331), found in Candida albicans (strain SC5314 / ATCC MYA-2876) (Yeast).